The following is a 233-amino-acid chain: 2-C-methyl-D-erythritol 4-phosphate cytidylyltransferase (233 aa).

It belongs to the IspD/TarI cytidylyltransferase family. IspD subfamily.

It carries out the reaction 2-C-methyl-D-erythritol 4-phosphate + CTP + H(+) = 4-CDP-2-C-methyl-D-erythritol + diphosphate. It functions in the pathway isoprenoid biosynthesis; isopentenyl diphosphate biosynthesis via DXP pathway; isopentenyl diphosphate from 1-deoxy-D-xylulose 5-phosphate: step 2/6. Catalyzes the formation of 4-diphosphocytidyl-2-C-methyl-D-erythritol from CTP and 2-C-methyl-D-erythritol 4-phosphate (MEP). The polypeptide is 2-C-methyl-D-erythritol 4-phosphate cytidylyltransferase (Aromatoleum aromaticum (strain DSM 19018 / LMG 30748 / EbN1) (Azoarcus sp. (strain EbN1))).